A 267-amino-acid polypeptide reads, in one-letter code: REH2-associated factor 2 (267 aa).

In terms of assembly, component of the REH2-associated complex (REH2C) composed of helicase REH2, associated factors H2F1 and H2F2, and mRNAs at various editing stages; the formation of the complex is RNA-independent. Interacts with various editing complexes including the RNA editing core (RECC) complex, the gRNA-binding (GRBC) complex (also known as the MRB1 complex) and the RNA editing mediator (REMC) complex.

It is found in the mitochondrion. Its function is as follows. May play a role in mitochondrial mRNA editing by facilitating the association of the gRNA-binding (GRBC) complex with the RNA editing core (RECC) complex. However, appears to be dispensable for mRNA editing per se. This is REH2-associated factor 2 from Trypanosoma brucei brucei (strain 927/4 GUTat10.1).